The sequence spans 436 residues: MDSGGASDPSRQVRVRFLTKLPAPLRAPPTSIAVPADLTRMGLSEIVNSLLLAASPDHQAQPFDFLVDGELVRLPLQEFLLAKGISVERVLELEYVKAVAPRKQEDPCPHDDWVSAVDGSNPSFVLTGCYDGLARIWRDASECTHILEGHSDGITSARFINKGETEDRLHVVTASKDRSLRLFKFDTSVSVPKQIGAYKILRGHTSSVQSVAVDPSTNMICSGSWDNSIKLWSVEGSEEDGDTVSVKKRRTNSDSSGPEESLFEGSATSTFLGHTQCVSAVTWPERQTIYSASWDHSVRQWDVQTGKETWNMVSGKALNCLDCGGESSSLIAAGGSDPVLRVWDPRKPGTLAPIFQFSSHKSWISACKWHPSSWFHLVSSSFDGKVMLWDLRTAWPLASVESHKDKVLCADWWKGDSVISGGADSKLCIASGIEIV.

Residues valine 13–lysine 97 form a ubiquitin-like (UBL) domain region. WD repeat units follow at residues proline 109–leucine 147, glycine 149–lysine 193, glycine 203–aspartate 242, glycine 273–asparagine 311, valine 313–proline 353, serine 359–serine 399, and serine 402–valine 436. Residues aspartate 240–leucine 262 form a disordered region.

This sequence belongs to the WD repeat WDR12/YTM1 family.

It localises to the nucleus. The protein resides in the nucleolus. It is found in the nucleoplasm. Functionally, required for maturation of ribosomal RNAs and formation of the large ribosomal subunit. The chain is Ribosome biogenesis protein WDR12 homolog from Oryza sativa subsp. japonica (Rice).